Reading from the N-terminus, the 226-residue chain is Probable GPI-anchored adhesin-like protein PGA28 (226 aa).

An N-terminal signal peptide occupies residues 1 to 26 (MKFFAYFAVIALSSASLINLFKRATA). Residues 119 to 209 (DTEATTGSDT…SQQTSSHAGG (91 aa)) form a disordered region. Positions 131-148 (KAATGATTSAGTGVTKTS) are enriched in low complexity. Residues 149 to 160 (ETGGVSSTANSE) show a composition bias toward polar residues. A compositionally biased stretch (low complexity) spans 161 to 208 (AKSGSVTTSKSGSTSISESKTTSGSSSSGKSSSSTSSASSQQTSSHAG). Serine 197 is lipidated: GPI-anchor amidated serine. Residues 198-226 (ASSQQTSSHAGGASGAFVSLLGLFAALLI) constitute a propeptide, removed in mature form.

Predicted to be a cleavage substrate for KEX2.

It localises to the cell membrane. Functionally, putative adhesin which is involved in cell adhesion and virulence. Plays a role in Candida-bacterial interactions and subsequent regulation of filamentation. In Candida albicans (strain SC5314 / ATCC MYA-2876) (Yeast), this protein is Probable GPI-anchored adhesin-like protein PGA28 (PGA28).